A 387-amino-acid chain; its full sequence is Xylose isomerase (387 aa).

Active-site residues include histidine 53 and aspartate 56. Residues glutamate 180, glutamate 216, histidine 219, aspartate 244, aspartate 254, aspartate 256, and aspartate 286 each contribute to the Mg(2+) site.

Belongs to the xylose isomerase family. In terms of assembly, homotetramer. It depends on Mg(2+) as a cofactor.

The protein localises to the cytoplasm. It catalyses the reaction alpha-D-xylose = alpha-D-xylulofuranose. The sequence is that of Xylose isomerase (xylA) from Thermus thermophilus (strain ATCC 27634 / DSM 579 / HB8).